The chain runs to 307 residues: Dioxygenase swnH1 (307 aa).

H149, D151, and H227 together coordinate Fe cation.

Belongs to the PhyH family. As to quaternary structure, homodimer. The cofactor is Fe cation.

It participates in mycotoxin biosynthesis. Functionally, dioxygenase; part of the gene cluster that mediates the biosynthesis of swainsonine (SW), a cytotoxic fungal alkaloid and a potential cancer therapy drug. Swainsonine production occurs via a multibranched pathway and is dispensable for fungal colonization of plants and infection of insect hosts. The first step of swainsonine biosynthesis is the production of the precursor pipecolic acid (PA) via conversion of L-lysine (Lys) to 1-piperideine-6-carboxylate (P6C) by the aminotransferase swnA, the latter being further reduced to PA by the reductase swnR. The PKS-NRPS hybrid synthetase swnK uptakes and condensates PA and malonyl-CoA with and without skipping of the ketoreductase (KR) domain in order to produce 3 intermediates, 1-oxoindolizidine, (1S)-1-hydroxyindolizin, and (1R)-1-hydroxyindolizine; with the transisomer (1S)-1-hydroxyindolizin being predominant. The terminal thioester reductase (TE) domain of swnK is involved in reduction of the thioester bond to release the intermediate aldehydes. The oxidoreductase swnN could contribute to the reduction of 1-oxoindolizidine to (1S)-1-hydroxyindolizin and (1R)-1-hydroxyindolizine, contributing to the major route of SW production. The dioxygenase swnH2 would be responsible for the oxidization of (1R)-1-hydroxyindolizine into (1R,2S)-1,2-dihydroxyindolizine and of (1S)-1-hydroxyindolizin to yield both (1R,2S)-1,2-dihydroxyindolizine and (1S,2S)-1,2-dihydroxyindolizine. The dioxygenase swnH1 then performs the conversion of the 1,2-dihydroxyindolizine epimers to SW. In Arthroderma benhamiae (strain ATCC MYA-4681 / CBS 112371) (Trichophyton mentagrophytes), this protein is Dioxygenase swnH1.